Here is a 395-residue protein sequence, read N- to C-terminus: Elongation factor Tu (395 aa).

The region spanning 10-204 (KPHVNIGTIG…AVDEYIPTPQ (195 aa)) is the tr-type G domain. The segment at 19–26 (GHVDHGKT) is G1. GTP is bound at residue 19–26 (GHVDHGKT). Residue T26 coordinates Mg(2+). The interval 60 to 64 (GITIS) is G2. The G3 stretch occupies residues 81 to 84 (DCPG). GTP contacts are provided by residues 81 to 85 (DCPGH) and 136 to 139 (NKCD). A G4 region spans residues 136–139 (NKCD). Residues 174–176 (SAL) are G5.

This sequence belongs to the TRAFAC class translation factor GTPase superfamily. Classic translation factor GTPase family. EF-Tu/EF-1A subfamily. Monomer.

Its subcellular location is the cytoplasm. The enzyme catalyses GTP + H2O = GDP + phosphate + H(+). GTP hydrolase that promotes the GTP-dependent binding of aminoacyl-tRNA to the A-site of ribosomes during protein biosynthesis. The protein is Elongation factor Tu of Geobacillus stearothermophilus (Bacillus stearothermophilus).